We begin with the raw amino-acid sequence, 336 residues long: Dihydroorotate dehydrogenase (quinone) (336 aa).

Residues 62-66 (AGLDK) and threonine 86 contribute to the FMN site. A substrate-binding site is contributed by lysine 66. Residue 111 to 115 (NRMGF) coordinates substrate. Residues asparagine 139 and asparagine 172 each coordinate FMN. Position 172 (asparagine 172) interacts with substrate. The active-site Nucleophile is the serine 175. Residue asparagine 177 participates in substrate binding. 2 residues coordinate FMN: lysine 217 and threonine 245. Position 246 to 247 (246 to 247 (NT)) interacts with substrate. FMN-binding positions include glycine 268, glycine 297, and 318 to 319 (YS).

The protein belongs to the dihydroorotate dehydrogenase family. Type 2 subfamily. Monomer. Requires FMN as cofactor.

It localises to the cell membrane. It carries out the reaction (S)-dihydroorotate + a quinone = orotate + a quinol. The protein operates within pyrimidine metabolism; UMP biosynthesis via de novo pathway; orotate from (S)-dihydroorotate (quinone route): step 1/1. Functionally, catalyzes the conversion of dihydroorotate to orotate with quinone as electron acceptor. This chain is Dihydroorotate dehydrogenase (quinone), found in Cronobacter sakazakii (strain ATCC BAA-894) (Enterobacter sakazakii).